The chain runs to 141 residues: Nucleoside diphosphate kinase (141 aa).

Residues lysine 11, phenylalanine 59, arginine 87, threonine 93, arginine 104, and asparagine 114 each coordinate ATP. Histidine 117 acts as the Pros-phosphohistidine intermediate in catalysis.

This sequence belongs to the NDK family. In terms of assembly, homotetramer. Mg(2+) is required as a cofactor.

The protein localises to the cytoplasm. The catalysed reaction is a 2'-deoxyribonucleoside 5'-diphosphate + ATP = a 2'-deoxyribonucleoside 5'-triphosphate + ADP. The enzyme catalyses a ribonucleoside 5'-diphosphate + ATP = a ribonucleoside 5'-triphosphate + ADP. Its function is as follows. Major role in the synthesis of nucleoside triphosphates other than ATP. The ATP gamma phosphate is transferred to the NDP beta phosphate via a ping-pong mechanism, using a phosphorylated active-site intermediate. This chain is Nucleoside diphosphate kinase, found in Proteus mirabilis (strain HI4320).